The primary structure comprises 203 residues: Large ribosomal subunit protein bL25 (203 aa).

This sequence belongs to the bacterial ribosomal protein bL25 family. CTC subfamily. Part of the 50S ribosomal subunit; part of the 5S rRNA/L5/L18/L25 subcomplex. Contacts the 5S rRNA. Binds to the 5S rRNA independently of L5 and L18.

In terms of biological role, this is one of the proteins that binds to the 5S RNA in the ribosome where it forms part of the central protuberance. The polypeptide is Large ribosomal subunit protein bL25 (Chlorobium phaeovibrioides (strain DSM 265 / 1930) (Prosthecochloris vibrioformis (strain DSM 265))).